A 37-amino-acid chain; its full sequence is Large ribosomal subunit protein bL12 (37 aa).

The protein belongs to the bacterial ribosomal protein bL12 family. As to quaternary structure, homodimer. Part of the ribosomal stalk of the 50S ribosomal subunit. Forms a multimeric L10(L12)X complex, where L10 forms an elongated spine to which 2 to 4 L12 dimers bind in a sequential fashion. Binds GTP-bound translation factors.

Forms part of the ribosomal stalk which helps the ribosome interact with GTP-bound translation factors. Is thus essential for accurate translation. This Clostridium pasteurianum protein is Large ribosomal subunit protein bL12 (rplL).